The chain runs to 368 residues: NAD(P)H-quinone oxidoreductase subunit 1, chloroplastic (368 aa).

The next 9 membrane-spanning stretches (helical) occupy residues 11-31, 33-53, 98-118, 131-151, 177-197, 205-225, 255-275, 305-325, and 348-368; these read RVIN…LIWI, IYIL…VWLE, WLFS…YLVI, IGVF…LMAG, LALC…VDIV, FWGW…ISSL, FGLF…FVTI, VLGI…FLFI, and FLLP…LLLL.

It belongs to the complex I subunit 1 family. As to quaternary structure, NDH is composed of at least 16 different subunits, 5 of which are encoded in the nucleus.

Its subcellular location is the plastid. The protein resides in the chloroplast thylakoid membrane. It catalyses the reaction a plastoquinone + NADH + (n+1) H(+)(in) = a plastoquinol + NAD(+) + n H(+)(out). The enzyme catalyses a plastoquinone + NADPH + (n+1) H(+)(in) = a plastoquinol + NADP(+) + n H(+)(out). NDH shuttles electrons from NAD(P)H:plastoquinone, via FMN and iron-sulfur (Fe-S) centers, to quinones in the photosynthetic chain and possibly in a chloroplast respiratory chain. The immediate electron acceptor for the enzyme in this species is believed to be plastoquinone. Couples the redox reaction to proton translocation, and thus conserves the redox energy in a proton gradient. In Cycas taitungensis (Prince sago), this protein is NAD(P)H-quinone oxidoreductase subunit 1, chloroplastic.